The following is a 357-amino-acid chain: MAEAATIAKLEEGFKKLEAATDCKSLLKKYLTKSVFDQLKGKKTSLGATLLDVIQSGVENLDSGVGVYAPDAEAYTLFAPLFDPIIEDYHKGFKQTDKHPNKDFGDVNQFVNVDPDGKFVISTRVRCGRSMEGYPFNPCLTEAQYKEMESKVSSTLSNLEGELKGTYFPLTGMTKDVQQKLIDDHFLFKEGDRFLQAANACRYWPTGRGIYHNDNKTFLVWCNEEDHLRIISMQMGGDLGQVYRRLVSAVNEIEKRVPFSHHDRLGFLTFCPTNLGTTVRASVHIKLPKLAANREKLEEVAGKYSLQVRGTRGEHTEAEGGVYDISNKRRMGLTEYQAVKEMQDGILELIKIEKEMQ.

In terms of domain architecture, Phosphagen kinase N-terminal spans 9–91 (KLEEGFKKLE…FDPIIEDYHK (83 aa)). 64–68 (GVGVY) is a binding site for L-arginine. One can recognise a Phosphagen kinase C-terminal domain in the interval 119 to 356 (FVISTRVRCG…LELIKIEKEM (238 aa)). ATP is bound by residues 122–126 (STRVR) and histidine 185. Cysteine 201 and cysteine 271 form a disulfide bridge. Glutamate 225 is an L-arginine binding site. Arginine 229 contributes to the ATP binding site. Residue cysteine 271 coordinates L-arginine. Residues 280–284 (RASVH) and 309–314 (RGTRGE) contribute to the ATP site. Residue glutamate 314 participates in L-arginine binding.

The protein belongs to the ATP:guanido phosphotransferase family. As to expression, expressed in chela muscle (at protein level). Expressed in muscle.

The catalysed reaction is L-arginine + ATP = N(omega)-phospho-L-arginine + ADP + H(+). Its function is as follows. Catalyzes the reversible transfer of high energy ATP gamma-phosphate group to L-arginine. The sequence is that of Arginine kinase Cal b 2.0101 from Callinectes bellicosus (Warrior swimming crab).